Reading from the N-terminus, the 274-residue chain is Penicillin-insensitive murein endopeptidase (274 aa).

The signal sequence occupies residues M1 to A19. 3 disulfide bridges follow: C44-C265, C187-C235, and C216-C223. Zn(2+)-binding residues include H110, H113, D120, D147, H150, and H211. The interval D225–L274 is disordered.

This sequence belongs to the peptidase M74 family. As to quaternary structure, dimer. Zn(2+) is required as a cofactor.

It localises to the periplasm. Its function is as follows. Murein endopeptidase that cleaves the D-alanyl-meso-2,6-diamino-pimelyl amide bond that connects peptidoglycan strands. Likely plays a role in the removal of murein from the sacculus. The protein is Penicillin-insensitive murein endopeptidase of Salmonella paratyphi B (strain ATCC BAA-1250 / SPB7).